The sequence spans 160 residues: Nascent polypeptide-associated complex subunit beta (160 aa).

Disordered regions lie at residues 16 to 36 (GGKG…GTDD) and 118 to 160 (ESYQ…TEVE). Basic residues predominate over residues 20-30 (TPRRKVKKVHK). In terms of domain architecture, NAC-A/B spans 33 to 98 (GTDDKKLQTA…GEDKELTELV (66 aa)). Residues 124 to 134 (QKEKGEDGDKK) show a composition bias toward basic and acidic residues. The span at 135–145 (DDDDEDDDDIP) shows a compositional bias: acidic residues.

This sequence belongs to the NAC-beta family. Part of the nascent polypeptide-associated complex (NAC), consisting of EGD2 and EGD1. NAC associates with ribosomes via EGD1.

Its subcellular location is the cytoplasm. The protein localises to the nucleus. Functionally, component of the nascent polypeptide-associated complex (NAC), a dynamic component of the ribosomal exit tunnel, protecting the emerging polypeptides from interaction with other cytoplasmic proteins to ensure appropriate nascent protein targeting. The NAC complex also promotes mitochondrial protein import by enhancing productive ribosome interactions with the outer mitochondrial membrane and blocks the inappropriate interaction of ribosomes translating non-secretory nascent polypeptides with translocation sites in the membrane of the endoplasmic reticulum. EGD1 may act as a transcription factor that exert a negative effect on the expression of several genes that are transcribed by RNA polymerase II. This is Nascent polypeptide-associated complex subunit beta (EGD1) from Phaeosphaeria nodorum (strain SN15 / ATCC MYA-4574 / FGSC 10173) (Glume blotch fungus).